Consider the following 276-residue polypeptide: Eukaryotic translation initiation factor 3 subunit G (276 aa).

Ser-148 is subject to Phosphoserine. The RRM domain maps to Thr-195–Lys-274.

The protein belongs to the eIF-3 subunit G family. As to quaternary structure, component of the eukaryotic translation initiation factor 3 (eIF-3) complex.

Its subcellular location is the cytoplasm. RNA-binding component of the eukaryotic translation initiation factor 3 (eIF-3) complex, which is involved in protein synthesis of a specialized repertoire of mRNAs and, together with other initiation factors, stimulates binding of mRNA and methionyl-tRNAi to the 40S ribosome. The eIF-3 complex specifically targets and initiates translation of a subset of mRNAs involved in cell proliferation. This subunit can bind 18S rRNA. In Debaryomyces hansenii (strain ATCC 36239 / CBS 767 / BCRC 21394 / JCM 1990 / NBRC 0083 / IGC 2968) (Yeast), this protein is Eukaryotic translation initiation factor 3 subunit G.